Here is a 344-residue protein sequence, read N- to C-terminus: Pre-mRNA polyadenylation factor fip1 (344 aa).

Disordered regions lie at residues 1–99 (MSNA…LSTA) and 230–344 (NYNT…RNRY). A compositionally biased stretch (polar residues) spans 28–38 (VTVSNAKSPEQ). Acidic residues predominate over residues 39–50 (ASEESDDSDIEF). Over residues 80–92 (QVEKTAVEVKTTE) the composition is skewed to basic and acidic residues. Over residues 243-258 (SGAATPNAYVNNNPSS) the composition is skewed to low complexity. The segment covering 271-301 (NITSSAGMTHAQPTHNPTSSYGNGASTNYNA) has biased composition (polar residues). Low complexity predominate over residues 302 to 317 (SRPPSNHPHSSNYPSS).

Belongs to the FIP1 family.

It is found in the nucleus. Its function is as follows. Pre-mRNA polyadenylation factor that directly interacts with poly(A) polymerase. This is Pre-mRNA polyadenylation factor fip1 from Schizosaccharomyces pombe (strain 972 / ATCC 24843) (Fission yeast).